The following is a 301-amino-acid chain: MPLILGGLAGAAAGYGAAAWLERRKPPPGKDPNIKHASLGVVRLDWHYHPLPGDVGSPDSFEYPVYYRAVPGLTFEICQSGKMSPEIQQNFKDAIEFLDKERGVSVITSDCGFFMWFQKEARLYTSKPVVMSSLALLPSLHAAIGTDGKIAIFSANSTSLGPMHDTVAKECGVDWDEACYVLVGCQDVEGFEAVASGEPLDLEKVTPGIVRKAKQVIAEHPDIHAILMECTQLPPFSDDVRAATGLPVYDAIVSADFFIRGFVDNPRFGLNDWHRPWDGHQEKYKLGDNVQDKEKLLHYKP.

Residues C111 and C230 each act as proton donor/acceptor in the active site.

The protein belongs to the aspartate/glutamate racemases family. ALMA1 subfamily. In terms of assembly, homotetramer.

It carries out the reaction S,S-dimethyl-beta-propiothetin = acrylate + dimethyl sulfide + H(+). Mediates cleavage of dimethylsulfoniopropionate (DMSP) into dimethyl sulfide (DMS) and acrylate. DMS is the principal form by which sulfur is transported from oceans to the atmosphere and is a key component of the ocean sulfur cycle. The chain is Dimethylsulfoniopropionate lyase from Durusdinium sp. clade D (Symbiodinium sp. clade D).